The following is a 442-amino-acid chain: Histidine--tRNA ligase (442 aa).

It belongs to the class-II aminoacyl-tRNA synthetase family. In terms of assembly, homodimer.

The protein localises to the cytoplasm. It carries out the reaction tRNA(His) + L-histidine + ATP = L-histidyl-tRNA(His) + AMP + diphosphate + H(+). In Helicobacter pylori (strain P12), this protein is Histidine--tRNA ligase.